Consider the following 304-residue polypeptide: Trypsin-3 (304 aa).

The Peptidase S1 domain maps to 81-301 (IVGGYTCEEN…YVDWIKDTIA (221 aa)). 5 disulfides stabilise this stretch: Cys-87/Cys-217, Cys-105/Cys-121, Cys-196/Cys-263, Cys-228/Cys-242, and Cys-253/Cys-277. The Charge relay system role is filled by His-120. Positions 132, 134, 137, 139, and 142 each coordinate Ca(2+). Catalysis depends on Asp-164, which acts as the Charge relay system. Tyr-211 carries the post-translational modification Sulfotyrosine. The active-site Charge relay system is the Ser-257.

It belongs to the peptidase S1 family. It depends on Ca(2+) as a cofactor. Detected in pancreas and pancreatic fluid (at protein level). Expressed in pancreas and brain. Detected in ileum.

The protein resides in the secreted. It catalyses the reaction Preferential cleavage: Arg-|-Xaa, Lys-|-Xaa.. With respect to regulation, not inhibited by Kunitz-type trypsin inhibitors. Its function is as follows. Digestive protease that cleaves proteins preferentially after an Arg residue and has proteolytic activity toward Kunitz-type trypsin inhibitors. The sequence is that of Trypsin-3 (PRSS3) from Homo sapiens (Human).